Consider the following 126-residue polypeptide: Protein ApaG (126 aa).

The ApaG domain occupies 2-126 (SDPRYQIDVS…FRLAVPGALH (125 aa)).

This is Protein ApaG from Pseudomonas entomophila (strain L48).